Here is a 180-residue protein sequence, read N- to C-terminus: dCTP deaminase, dUMP-forming (180 aa).

DCTP contacts are provided by residues 100–105 (RSSLGR), Asp-117, 125–127 (TLE), Gln-146, Tyr-160, and Gln-167. Residue Glu-127 is the Proton donor/acceptor of the active site.

It belongs to the dCTP deaminase family. As to quaternary structure, homotrimer.

The catalysed reaction is dCTP + 2 H2O = dUMP + NH4(+) + diphosphate. It participates in pyrimidine metabolism; dUMP biosynthesis; dUMP from dCTP: step 1/1. In terms of biological role, bifunctional enzyme that catalyzes both the deamination of dCTP to dUTP and the hydrolysis of dUTP to dUMP without releasing the toxic dUTP intermediate. In Sulfurihydrogenibium sp. (strain YO3AOP1), this protein is dCTP deaminase, dUMP-forming.